We begin with the raw amino-acid sequence, 410 residues long: E3 ubiquitin-protein ligase PRT1 (410 aa).

2 consecutive RING-type zinc fingers follow at residues 26-66 and 192-232; these read CCVC…PICR and CSAC…QECN. Residues 306–370 form a ZZ-type zinc finger; that stretch reads HFGAGCDSCG…RLELARSPQV (65 aa). Zn(2+) contacts are provided by cysteine 311, cysteine 314, cysteine 326, cysteine 329, cysteine 338, cysteine 341, histidine 356, and histidine 360. Residues 385–410 form a disordered region; that stretch reads ISNEGMDTDEGEEGPPGSSNESSSTE. Over residues 399–410 the composition is skewed to low complexity; that stretch reads PPGSSNESSSTE.

The protein localises to the cytoplasm. It catalyses the reaction S-ubiquitinyl-[E2 ubiquitin-conjugating enzyme]-L-cysteine + [acceptor protein]-L-lysine = [E2 ubiquitin-conjugating enzyme]-L-cysteine + N(6)-ubiquitinyl-[acceptor protein]-L-lysine.. The protein operates within protein modification; protein ubiquitination. E3 ubiquitin-protein ligase that mediates ubiquitination and subsequent proteasomal degradation of target proteins. Functions in the N-end rule pathway of protein degradation, where it specifically recognizes and ubiquitinates proteins with a N-terminal bulky aromatic amino acid (Phe). Does not act on aliphatic hydrophobic and basic N-terminal residues (Arg or Leu) containing proteins. The chain is E3 ubiquitin-protein ligase PRT1 (PRT1) from Arabidopsis thaliana (Mouse-ear cress).